A 133-amino-acid chain; its full sequence is ATP synthase epsilon chain, chloroplastic (133 aa).

This sequence belongs to the ATPase epsilon chain family. F-type ATPases have 2 components, CF(1) - the catalytic core - and CF(0) - the membrane proton channel. CF(1) has five subunits: alpha(3), beta(3), gamma(1), delta(1), epsilon(1). CF(0) has three main subunits: a, b and c.

It is found in the plastid. It localises to the chloroplast thylakoid membrane. Produces ATP from ADP in the presence of a proton gradient across the membrane. The polypeptide is ATP synthase epsilon chain, chloroplastic (Nephroselmis olivacea (Green alga)).